A 156-amino-acid polypeptide reads, in one-letter code: 2-C-methyl-D-erythritol 2,4-cyclodiphosphate synthase (156 aa).

2 residues coordinate a divalent metal cation: D9 and H11. 4-CDP-2-C-methyl-D-erythritol 2-phosphate-binding positions include 9–11 and 36–37; these read DAH and HS. H44 provides a ligand contact to a divalent metal cation. 58–60 lines the 4-CDP-2-C-methyl-D-erythritol 2-phosphate pocket; that stretch reads NIG.

It belongs to the IspF family. Homotrimer. It depends on a divalent metal cation as a cofactor.

The enzyme catalyses 4-CDP-2-C-methyl-D-erythritol 2-phosphate = 2-C-methyl-D-erythritol 2,4-cyclic diphosphate + CMP. The protein operates within isoprenoid biosynthesis; isopentenyl diphosphate biosynthesis via DXP pathway; isopentenyl diphosphate from 1-deoxy-D-xylulose 5-phosphate: step 4/6. Involved in the biosynthesis of isopentenyl diphosphate (IPP) and dimethylallyl diphosphate (DMAPP), two major building blocks of isoprenoid compounds. Catalyzes the conversion of 4-diphosphocytidyl-2-C-methyl-D-erythritol 2-phosphate (CDP-ME2P) to 2-C-methyl-D-erythritol 2,4-cyclodiphosphate (ME-CPP) with a corresponding release of cytidine 5-monophosphate (CMP). This Kosmotoga olearia (strain ATCC BAA-1733 / DSM 21960 / TBF 19.5.1) protein is 2-C-methyl-D-erythritol 2,4-cyclodiphosphate synthase.